The primary structure comprises 109 residues: Nucleoid-associated protein Asuc_0997 (109 aa).

A disordered region spans residues 1 to 23; the sequence is MFGKGGLGGLMKQAQQMQERMQK.

It belongs to the YbaB/EbfC family. In terms of assembly, homodimer.

The protein resides in the cytoplasm. It localises to the nucleoid. Binds to DNA and alters its conformation. May be involved in regulation of gene expression, nucleoid organization and DNA protection. This is Nucleoid-associated protein Asuc_0997 from Actinobacillus succinogenes (strain ATCC 55618 / DSM 22257 / CCUG 43843 / 130Z).